We begin with the raw amino-acid sequence, 288 residues long: Diaminopimelate epimerase (288 aa).

Residues asparagine 14 and asparagine 67 each coordinate substrate. The active-site Proton donor is the cysteine 76. Residues 77–78, asparagine 166, asparagine 199, and 217–218 contribute to the substrate site; these read GN and ER. Cysteine 226 functions as the Proton acceptor in the catalytic mechanism. 227-228 is a binding site for substrate; the sequence is GT.

Belongs to the diaminopimelate epimerase family. In terms of assembly, homodimer.

It localises to the cytoplasm. It carries out the reaction (2S,6S)-2,6-diaminopimelate = meso-2,6-diaminopimelate. It functions in the pathway amino-acid biosynthesis; L-lysine biosynthesis via DAP pathway; DL-2,6-diaminopimelate from LL-2,6-diaminopimelate: step 1/1. In terms of biological role, catalyzes the stereoinversion of LL-2,6-diaminopimelate (L,L-DAP) to meso-diaminopimelate (meso-DAP), a precursor of L-lysine and an essential component of the bacterial peptidoglycan. In Bacillus cereus (strain 03BB102), this protein is Diaminopimelate epimerase.